Reading from the N-terminus, the 445-residue chain is DNA polymerase IV (445 aa).

In terms of domain architecture, UmuC spans 49-229; it reads LAHVDCDAFY…KPVGMIWGVG (181 aa). Positions 53 and 146 each coordinate Mg(2+). Glutamate 147 is an active-site residue.

This sequence belongs to the DNA polymerase type-Y family. In terms of assembly, monomer. Mg(2+) serves as cofactor.

The protein resides in the cytoplasm. The catalysed reaction is DNA(n) + a 2'-deoxyribonucleoside 5'-triphosphate = DNA(n+1) + diphosphate. Functionally, poorly processive, error-prone DNA polymerase involved in untargeted mutagenesis. Copies undamaged DNA at stalled replication forks, which arise in vivo from mismatched or misaligned primer ends. These misaligned primers can be extended by PolIV. Exhibits no 3'-5' exonuclease (proofreading) activity. May be involved in translesional synthesis, in conjunction with the beta clamp from PolIII. The polypeptide is DNA polymerase IV (Brucella melitensis biotype 1 (strain ATCC 23456 / CCUG 17765 / NCTC 10094 / 16M)).